The following is a 137-amino-acid chain: Protein cornichon homolog 4 (137 aa).

The next 3 helical transmembrane spans lie at 8–28, 53–73, and 113–133; these read LISFFFLIALVGIIVYQLVCL, FIVQGVLCVFYLLTGHWFMTL, and LAYIVLNLFLTIFWMIYSALD.

The protein belongs to the cornichon family.

The protein resides in the membrane. This Arabidopsis thaliana (Mouse-ear cress) protein is Protein cornichon homolog 4.